A 269-amino-acid chain; its full sequence is Shikimate dehydrogenase (NADP(+)) (269 aa).

Shikimate contacts are provided by residues 17–19 (SKS) and threonine 64. The active-site Proton acceptor is the lysine 68. Aspartate 80 contributes to the NADP(+) binding site. 2 residues coordinate shikimate: asparagine 89 and aspartate 105. NADP(+)-binding positions include 130–134 (GAGGA), 154–159 (NRTHAK), and methionine 213. Position 215 (tyrosine 215) interacts with shikimate. Glycine 237 provides a ligand contact to NADP(+).

This sequence belongs to the shikimate dehydrogenase family. Homodimer.

The enzyme catalyses shikimate + NADP(+) = 3-dehydroshikimate + NADPH + H(+). Its pathway is metabolic intermediate biosynthesis; chorismate biosynthesis; chorismate from D-erythrose 4-phosphate and phosphoenolpyruvate: step 4/7. In terms of biological role, involved in the biosynthesis of the chorismate, which leads to the biosynthesis of aromatic amino acids. Catalyzes the reversible NADPH linked reduction of 3-dehydroshikimate (DHSA) to yield shikimate (SA). The polypeptide is Shikimate dehydrogenase (NADP(+)) (Neisseria polysaccharea).